Consider the following 396-residue polypeptide: S-adenosylmethionine synthase (396 aa).

H16 contacts ATP. Residue D18 coordinates Mg(2+). E44 contacts K(+). E57 and Q100 together coordinate L-methionine. The interval 100–110 (QSVDIAQGVDR) is flexible loop. ATP contacts are provided by residues 165–167 (DAK), 231–232 (KF), D240, 246–247 (RK), A263, and K267. D240 provides a ligand contact to L-methionine. K271 is an L-methionine binding site.

The protein belongs to the AdoMet synthase family. As to quaternary structure, homotetramer; dimer of dimers. Requires Mg(2+) as cofactor. K(+) is required as a cofactor.

It is found in the cytoplasm. It catalyses the reaction L-methionine + ATP + H2O = S-adenosyl-L-methionine + phosphate + diphosphate. It functions in the pathway amino-acid biosynthesis; S-adenosyl-L-methionine biosynthesis; S-adenosyl-L-methionine from L-methionine: step 1/1. Its function is as follows. Catalyzes the formation of S-adenosylmethionine (AdoMet) from methionine and ATP. The overall synthetic reaction is composed of two sequential steps, AdoMet formation and the subsequent tripolyphosphate hydrolysis which occurs prior to release of AdoMet from the enzyme. The protein is S-adenosylmethionine synthase of Marinobacter nauticus (strain ATCC 700491 / DSM 11845 / VT8) (Marinobacter aquaeolei).